The following is a 132-amino-acid chain: Small ribosomal subunit protein uS8 (132 aa).

This sequence belongs to the universal ribosomal protein uS8 family. As to quaternary structure, part of the 30S ribosomal subunit. Contacts proteins S5 and S12.

In terms of biological role, one of the primary rRNA binding proteins, it binds directly to 16S rRNA central domain where it helps coordinate assembly of the platform of the 30S subunit. This is Small ribosomal subunit protein uS8 from Leuconostoc citreum (strain KM20).